Consider the following 200-residue polypeptide: MARFRGSNWKKSRRLGISLSGTGKELEKRPYAPGQHGPNQRKKLSEYGLQLREKQKLRYLYGMTERQFRNTFDIAGKQYGVHGENFMILLASRLDAVVYSLGLARTRRQARQLVNHGHIEVDGGRVDIPSYSLKPGQVITVREKSQNLDIIKESVEINNFVPEYLDFDADNLKGTFVRFPERSELPAEINEQLIVEYYSR.

In terms of domain architecture, S4 RNA-binding spans 92-155 (SRLDAVVYSL…QNLDIIKESV (64 aa)).

Belongs to the universal ribosomal protein uS4 family. In terms of assembly, part of the 30S ribosomal subunit. Contacts protein S5. The interaction surface between S4 and S5 is involved in control of translational fidelity.

One of the primary rRNA binding proteins, it binds directly to 16S rRNA where it nucleates assembly of the body of the 30S subunit. Functionally, with S5 and S12 plays an important role in translational accuracy. The protein is Small ribosomal subunit protein uS4 of Staphylococcus epidermidis (strain ATCC 35984 / DSM 28319 / BCRC 17069 / CCUG 31568 / BM 3577 / RP62A).